A 78-amino-acid polypeptide reads, in one-letter code: U7-lycotoxin-Ls1h (78 aa).

Residues 1 to 22 (MKLIIFTGLTLLLIVSLIDVEA) form the signal peptide. A propeptide spanning residues 23–26 (QNEG) is cleaved from the precursor.

Belongs to the neurotoxin 19 (CSTX) family. 07 (U7-Lctx) subfamily. Contains 4 disulfide bonds. In terms of tissue distribution, expressed by the venom gland.

It localises to the secreted. The chain is U7-lycotoxin-Ls1h from Lycosa singoriensis (Wolf spider).